The sequence spans 505 residues: MIDDTENSKIHLEGSHKTGKYTGYGTTHKIRAQLNFNDEKKWKKFSSRRLELIDSFGLSQHKASEQDDNIRQIATILRSEFEYPDTFSAEFEKLVTAAVQSVRRNRKRSKKKLLDSKKKIARGKVQKIPLSPPSSSNMGSCSASNASSSDEEASVKEEPAEHALPSLNTITSQKLLPYPNGRTLPPVPTQVRSLLKKNASLLRDPSAPYAHGGDEKLQKFDIEDQPLESEQEYDFIAKSIIVEIVNNAIPLPEQIQRDKFIRPNLTKKKGCQSKVVISNNLRKLILSKIHNSRTCLEMSKDERNLDSFANLETLGKNSLMASISLVVENSFSHLPSSTKQYLTERLSSIEFLTILSQRLFMPATRQLFADLSQEKIQVRVLNLILGSLVKDYGFDASLAPINEIIYHMTLHQYPLVCSNKQSNPMRPHSTSEVLSAHSSTKDASTPGKEEPRVTRSSTSADSTIITLPSIEVPNTYDDDRLKMLSAISLQIENSTFSKPFSTISK.

Over residues 1–16 (MIDDTENSKIHLEGSH) the composition is skewed to basic and acidic residues. Disordered stretches follow at residues 1-23 (MIDD…KYTG), 105-179 (NRKR…LPYP), and 421-460 (QSNP…STSA). Residues 133–148 (PSSSNMGSCSASNASS) are compositionally biased toward low complexity. Positions 421–443 (QSNPMRPHSTSEVLSAHSSTKDA) are enriched in polar residues.

The protein belongs to the VHR1 family.

The protein resides in the nucleus. Transcription factor that regulates ERG9, but seems to have a more global function in transcription. The polypeptide is Transcription factor VHR2 (VHR2) (Saccharomyces cerevisiae (strain ATCC 204508 / S288c) (Baker's yeast)).